Here is a 75-residue protein sequence, read N- to C-terminus: Tautomerase PptA (75 aa).

Catalysis depends on proline 2, which acts as the Proton acceptor; via imino nitrogen.

Belongs to the 4-oxalocrotonate tautomerase family. PptA subfamily. Homodimer.

It localises to the cytoplasm. This Klebsiella pneumoniae subsp. pneumoniae (strain ATCC 700721 / MGH 78578) protein is Tautomerase PptA.